The chain runs to 180 residues: Thebaine synthase 1 (180 aa).

Ser-96 provides a ligand contact to thebaine. The active-site Proton acceptor is the His-111. Thr-127 is a binding site for thebaine.

Belongs to the MLP family. Homodimer (allosteric) and oligomers. As to expression, expressed in poppy latex.

The enzyme catalyses (7S)-O-acetylsalutaridinol = thebaine + acetate + H(+). The protein operates within alkaloid biosynthesis; morphine biosynthesis. Functionally, catalyzes the formation of thebaine from (7S)-salutaridinol 7-O-acetate at the expense of labile hydroxylated by-products, which are preferentially produced by spontaneous allylic elimination. In Papaver somniferum (Opium poppy), this protein is Thebaine synthase 1.